Reading from the N-terminus, the 856-residue chain is Facilitated trehalose transporter Tret1 (856 aa).

Disordered regions lie at residues 1–29 and 62–202; these read MSGR…LKEK and DPFL…KATS. The Cytoplasmic portion of the chain corresponds to 1-389; that stretch reads MSGRDNRGAG…LEVYRPTTNP (389 aa). A compositionally biased stretch (polar residues) spans 69 to 80; it reads VSPQRHPQTVRT. The span at 133-142 shows a compositional bias: basic and acidic residues; sequence EIREHRDRQQ. Polar residues predominate over residues 170-180; it reads GNSNTNSNKAA. Phosphoserine is present on residues S247, S248, S249, S319, and S321. Residues 326 to 345 form a disordered region; it reads LTSRQHFQQQRSISTDSRKS. Over residues 329 to 340 the composition is skewed to polar residues; it reads RQHFQQQRSIST. The helical transmembrane segment at 390 to 410 threads the bilayer; the sequence is IFIWTQVIAALSVSLGSLVVG. At 411-439 the chain is on the extracellular side; that stretch reads FVSAYTSPALVSMSDPNITSFTVTKDAGS. A glycan (N-linked (GlcNAc...) asparagine) is linked at N427. Residues 440 to 460 traverse the membrane as a helical segment; sequence WVGGIMPLAGLVGGVAGGPLI. Residues 461-472 are Cytoplasmic-facing; it reads EYMGRRNTILAT. A helical transmembrane segment spans residues 473-493; sequence AVPFIVSSLLIACAVNVAMVL. Residues 494-496 are Extracellular-facing; that stretch reads CGR. A helical membrane pass occupies residues 497-517; sequence FLAGFCVGIASLSLPVYLGET. Over 518–527 the chain is Cytoplasmic; that stretch reads VQPEVRGTLG. A helical membrane pass occupies residues 528–548; that stretch reads LLPTAFGNIGILVCFVAGSFM. Residue N549 is glycosylated (N-linked (GlcNAc...) asparagine). Topologically, residues 549-551 are extracellular; sequence NWS. The chain crosses the membrane as a helical span at residues 552–572; it reads MLAFLGAALPVPFLILMFLIP. Over 573 to 635 the chain is Cytoplasmic; it reads ETPRWYVSRG…ELLKRNNLKP (63 aa). The helical transmembrane segment at 636-656 threads the bilayer; that stretch reads LSISLGLMFFQQFSGINAVIF. The Extracellular segment spans residues 657–672; it reads YTVQIFKDAGSTIDGN. Residues 673–693 form a helical membrane-spanning segment; sequence VCTIIVGVVNFVATFIGILLI. The Cytoplasmic segment spans residues 694–699; it reads DRAGRK. A helical transmembrane segment spans residues 700-720; it reads ILLYASDIAMVLTLFVLGGFF. Residues 721–739 lie on the Extracellular side of the membrane; it reads YCKAHGPDVSHLGWLPLTC. A helical membrane pass occupies residues 740 to 760; it reads FVVYILGFSVGFGPIPWLMMG. Residues 761–766 lie on the Cytoplasmic side of the membrane; it reads EILPAK. The helical transmembrane segment at 767–787 threads the bilayer; sequence IRGAAASVATSFNWTCTFVVT. Topologically, residues 788–800 are extracellular; the sequence is KTFQDLVGSLGAH. Residues 801–821 traverse the membrane as a helical segment; sequence GAFWLFGAICFVGLFFVILYV. Residues 822–856 are Cytoplasmic-facing; it reads PETQGKTLEDIERKMMGRVRRMSSVANIKPLSFNM. Phosphoserine occurs at positions 844 and 845.

The protein belongs to the major facilitator superfamily. Sugar transporter (TC 2.A.1.1) family. Trehalose transporter subfamily.

Its subcellular location is the cell membrane. In terms of biological role, low-capacity facilitative transporter for trehalose. Does not transport maltose, sucrose or lactose. Mediates the bidirectional transfer of trehalose. Responsible for the transport of trehalose synthesized in the fat body and the incorporation of trehalose into other tissues that require a carbon source, thereby regulating trehalose levels in the hemolymph. The protein is Facilitated trehalose transporter Tret1 of Drosophila yakuba (Fruit fly).